A 128-amino-acid chain; its full sequence is Ribonuclease P protein component 4 (128 aa).

Cys63, Cys66, Cys92, and Cys95 together coordinate Zn(2+).

This sequence belongs to the eukaryotic/archaeal RNase P protein component 4 family. As to quaternary structure, consists of a catalytic RNA component and at least 4 protein subunits. Forms a subcomplex with Rnp1 which stimulates the catalytic RNA. The cofactor is Zn(2+).

The protein resides in the cytoplasm. The enzyme catalyses Endonucleolytic cleavage of RNA, removing 5'-extranucleotides from tRNA precursor.. In terms of biological role, part of ribonuclease P, a protein complex that generates mature tRNA molecules by cleaving their 5'-ends. This is Ribonuclease P protein component 4 from Methanocaldococcus jannaschii (strain ATCC 43067 / DSM 2661 / JAL-1 / JCM 10045 / NBRC 100440) (Methanococcus jannaschii).